The following is a 275-amino-acid chain: MSAHREETVRRLAAPDIAARKGGVPIVCLTAYTAPVAAALDDACDVLLVGDSVGMVVHGLPNTVGVTMEMMILHGQAVMRGSKKAMVVVDMPFGSYEASHEEAYANAVRIMKETGAQAVKVESGPTVPETIAYLTRRGVPVMGHVGLRPQAVLLEGGFKAKGKDDAGRAKVLEEARLTAEAGAFAIVVEGVAESLAREVTESVSVPTIGIGASAGCDGQVLVVDDMLGLFDWTPKFVRRYADLKGEIERAAAQYASDVRDRSFPGPAETYYAKKP.

Mg(2+) contacts are provided by D51 and D90. 3-methyl-2-oxobutanoate is bound by residues 51–52, D90, and K120; that span reads DS. E122 serves as a coordination point for Mg(2+). Residue E189 is the Proton acceptor of the active site.

It belongs to the PanB family. As to quaternary structure, homodecamer; pentamer of dimers. Mg(2+) serves as cofactor.

The protein localises to the cytoplasm. The enzyme catalyses 3-methyl-2-oxobutanoate + (6R)-5,10-methylene-5,6,7,8-tetrahydrofolate + H2O = 2-dehydropantoate + (6S)-5,6,7,8-tetrahydrofolate. It participates in cofactor biosynthesis; (R)-pantothenate biosynthesis; (R)-pantoate from 3-methyl-2-oxobutanoate: step 1/2. Functionally, catalyzes the reversible reaction in which hydroxymethyl group from 5,10-methylenetetrahydrofolate is transferred onto alpha-ketoisovalerate to form ketopantoate. This Caulobacter vibrioides (strain ATCC 19089 / CIP 103742 / CB 15) (Caulobacter crescentus) protein is 3-methyl-2-oxobutanoate hydroxymethyltransferase.